Reading from the N-terminus, the 126-residue chain is Aspartate 1-decarboxylase (126 aa).

Residue Ser-25 is the Schiff-base intermediate with substrate; via pyruvic acid of the active site. A Pyruvic acid (Ser) modification is found at Ser-25. Residue Thr-57 participates in substrate binding. Tyr-58 (proton donor) is an active-site residue. 73 to 75 serves as a coordination point for substrate; the sequence is GSA.

The protein belongs to the PanD family. In terms of assembly, heterooctamer of four alpha and four beta subunits. It depends on pyruvate as a cofactor. In terms of processing, is synthesized initially as an inactive proenzyme, which is activated by self-cleavage at a specific serine bond to produce a beta-subunit with a hydroxyl group at its C-terminus and an alpha-subunit with a pyruvoyl group at its N-terminus.

Its subcellular location is the cytoplasm. It catalyses the reaction L-aspartate + H(+) = beta-alanine + CO2. It participates in cofactor biosynthesis; (R)-pantothenate biosynthesis; beta-alanine from L-aspartate: step 1/1. Functionally, catalyzes the pyruvoyl-dependent decarboxylation of aspartate to produce beta-alanine. The protein is Aspartate 1-decarboxylase of Acidovorax ebreus (strain TPSY) (Diaphorobacter sp. (strain TPSY)).